A 495-amino-acid chain; its full sequence is Cyclic GMP-AMP synthase (495 aa).

The interval 1 to 128 (MAARRGKSTR…AGATELAAPA (128 aa)) is disordered. Residues 1–134 (MAARRGKSTR…AAPARMEAPP (134 aa)) are DNA-binding. Lys7 is modified (N6-acetyllysine). Phosphoserine is present on Ser13. Composition is skewed to basic and acidic residues over residues 52–76 (CRREKSGPDPREKPQVRTRTARAED) and 105–116 (RAREARSARELR). At Lys56 the chain carries N6-acetyllysine. Ser57 carries the post-translational modification Phosphoserine. The required for association with the cell membrane stretch occupies residues 57–68 (SGPDPREKPQVR). Residues 103 to 134 (SCRAREARSARELRPQAGATELAAPARMEAPP) form a required for activation upon DNA viral infection region. The Nuclear export signal signature appears at 143 to 148 (LEKVRL). The residue at position 145 (Lys145) is an N6-lactoyllysine. Residues 147–190 (RLSRHEISEAAEVVNWVVEHLLRRLQGGESEFKGVALLRTGSYY) form a DNA-binding region. Glu165 is modified (polyADP-ribosyl glutamic acid). Position 186 (Thr186) interacts with GTP. The residue at position 188 (Ser188) is a Phosphoserine. Ser188 contributes to the ATP binding site. Position 190 is a phosphotyrosine (Tyr190). Mg(2+) contacts are provided by Glu200 and Asp202. Position 202 (Asp202) interacts with 2',3'-cGAMP. A Glycyl lysine isopeptide (Lys-Gly) (interchain with G-Cter in SUMO) cross-link involves residue Lys206. A Glycyl lysine isopeptide (Lys-Gly) (interchain with G-Cter in ubiquitin) cross-link involves residue Lys260. Glu261 is subject to 5-glutamyl polyglutamate. The Nuclear localization signal motif lies at 268–278 (GVTVERKRRGS). Ser278 is modified (phosphoserine). Position 294 (Asp294) interacts with GTP. Position 294 (Asp294) interacts with Mg(2+). 2',3'-cGAMP is bound at residue Asp294. An interaction with collided ribosomes region spans residues 316–357 (SQWLGAKVKNNLKRQPFYLVPKHAKEGSGFQEETWRLSFSHI). Residue Lys322 forms a Glycyl lysine isopeptide (Lys-Gly) (interchain with G-Cter in SUMO); alternate linkage. Lys322 is covalently cross-linked (Glycyl lysine isopeptide (Lys-Gly) (interchain with G-Cter in ubiquitin); alternate). 2',3'-cGAMP is bound by residues Lys337 and Arg351. Position 351 to 358 (351 to 358 (RLSFSHIE)) interacts with GTP. Glu358 is an ATP binding site. Lys359 carries the N6-acetyllysine modification. Lys359 participates in a covalent cross-link: Glycyl lysine isopeptide (Lys-Gly) (interchain with G-Cter in SUMO); alternate. Lys359 participates in a covalent cross-link: Glycyl lysine isopeptide (Lys-Gly) (interchain with G-Cter in ubiquitin); alternate. Residues 359–382 (KDILKNHGQSKTCCEIDGVKCCRK) are DNA-binding. His365 contributes to the Zn(2+) binding site. Lys369 carries the post-translational modification N6-acetyllysine. Lys369 is covalently cross-linked (Glycyl lysine isopeptide (Lys-Gly) (interchain with G-Cter in SUMO)). Positions 371, 372, and 379 each coordinate Zn(2+). Residues Cys379 and Cys380 are each lipidated (S-palmitoyl cysteine). Glycyl lysine isopeptide (Lys-Gly) (interchain with G-Cter in ubiquitin) cross-links involve residues Lys386, Lys389, Lys396, and Lys397. The residue at position 389 (Lys389) is an N6-acetyllysine. Residue Lys389 participates in ATP binding. Ser410 bears the Phosphoserine mark. Position 410–414 (410–414 (SYHVK)) interacts with ATP. Cys449 carries the S-palmitoyl cysteine lipid modification. Lys481 is modified (N6-methyllysine).

Belongs to the mab-21 family. As to quaternary structure, monomer in the absence of DNA. Homodimer in presence of dsDNA: forms a 2:2 dimer with two enzymes binding to two DNA molecules. Interacts with nucleosomes; interaction is mainly mediated via histones H2A and H2B and inactivates the nucleotidyltransferase activity by blocking DNA-binding and subsequent activation. Interacts with PQBP1 (via WW domain). Interacts with TRIM14; this interaction recruits USP14, leading to deubiquitinate and stabilize CGAS and promote type I interferon production. Interacts with ZCCHC3; promoting sensing of dsDNA by CGAS. Interacts (when not monomethylated) with (poly-ADP-ribosylated) PARP1; interaction takes place in the nucleus and prevents the formation of the PARP1-TIMELESS complex. Interacts (when monomethylated) with SGF29; interaction with SGF29 prevents interaction with PARP1. Interacts with PCBP2; preventing the formation of liquid-like droplets in which CGAS is activated. Interacts with IRGM; promoting CGAS degradation. Mg(2+) serves as cofactor. It depends on Mn(2+) as a cofactor. Zn(2+) is required as a cofactor. The N-terminal disordered part (1-134) is phosphorylated by AURKB during the G2-M transition, blocking CGAS liquid phase separation and preventing activation. Phosphorylation at Tyr-190 by BLK promotes cytosolic retention. Localizes into the nucleus following dephosphorylation at Tyr-190. Phosphorylation at Ser-410 activates the nucleotidyltransferase activity. Dephosphorylation at Ser-410 by PPP6C impairs its ability to bind GTP, thereby inactivating it. Phosphorylation at Ser-188 by PRKDC inhibits its cyclic GMP-AMP synthase activity by impairing homodimerization and activation. Phosphorylation at Ser-278 by AKT (AKT1, AKT2 or AKT3) suppresses the nucleotidyltransferase activity. Phosphorylation at Ser-278 by CDK1 during mitosis leads to its inhibition, thereby preventing CGAS activation by self-DNA during mitosis. Dephosphorylated at Ser-278 by protein phosphatase PP1 upon mitotic exit. Post-translationally, ubiquitinated at Lys-389 via 'Lys-48'-linked polyubiquitin chains, leading to its SQSTM1-mediated autophagic degradation. Interaction with TRIM14 promotes recruitment of USP14, leading to deubiquitinate Lys-389 and stabilize CGAS. Ubiquitinated at Lys-359 by RNF185 via 'Lys-27'-linked polyubiquitination, promoting CGAS cyclic GMP-AMP synthase activity. Monoubiquitination at Lys-322 by TRIM56 promotes oligomerization and subsequent activation. Monoubiquitination by TRIM41 promotes CGAS activation. Ubiquitination at Lys-260 via 'Lys-48'-linked polyubiquitination promotes its degradation. Deubiquitination at Lys-260 by USP29 promotes its stabilization. Deubiquitinated by USP27X, promoting its stabilization. Ubiquitinated at Lys-386 via 'Lys-63'-linked polyubiquitin chains by MARCHF8, leading to the inhibition of its DNA binding ability. In cycling cells, nucleosome-bound CGAS is ubiquitinated at Lys-396 and Lys-397 via 'Lys-48'-linked polyubiquitin chains by the ECS(SPSB3) complex, leading to its degradation: ubiquitination and degradation of nuclear CGAS during G1 and G2 phases is required to promote low intranuclear CGAS abundance before the next mitotic cycle. In terms of processing, sumoylated at Lys-206 by TRIM38 in uninfected cells and during the early phase of viral infection, promoting its stability by preventing ubiquitination at Lys-260 and subsequent degradation. Desumoylated by SENP2 during the late phase of viral infection. Sumoylation at Lys-322, Lys-359 and Lys-369 prevents DNA-binding, oligomerization and nucleotidyltransferase activity. Desumoylation at Lys-322, Lys-359 and Lys-369 by SENP7 relieves inhibition and activates CGAS. Polyglutamylated by TTLL6 at Glu-261, leading to impair DNA-binding activity. Deglutamylated by AGBL5/CCP5 and AGBL6/CCP6. Post-translationally, acetylation at Lys-359, Lys-369 and Lys-389 inhibits the cyclic GMP-AMP synthase activity. Deacetylated upon cytosolic DNA challenge such as viral infections. Acetylation by KAT5 increases the cyclic GMP-AMP synthase activity by promoting DNA-binding and subsequent activation. In terms of processing, proteolytically cleaved by apoptotic caspases during apoptosis, leading to its inactivation. The damage of the nucleus and the mitochondria during apoptosis leads to leakage of nuclear and mitochondrial DNA, which activate CGAS: cleavage and inactivation during apoptosis in required to prevent cytokine overproduction. Cleaved by CASP7 and CASP3 during virus-induced apoptosis, thereby inactivating it and preventing cytokine overproduction. Cleaved by CASP1 upon DNA virus infection; the cleavage impairs cGAMP production. Also cleaved by the pyroptotic CASP4 during non-canonical inflammasome activation; does not cut at the same sites than CASP1. Degraded via selective autophagy following interaction with IRGM. IRGM promotes CGAS recruitment to autophagosome membranes, promoting its SQSTM1/p62-dependent autophagic degradation. Post-translationally, poly-ADP-ribosylation at Glu-165 by PARP1 impairs DNA-binding, thereby preventing the cyclic GMP-AMP synthase activity. In terms of processing, palmitoylation at Cys-449 by ZDHHC18 impairs DNA-binding, thereby preventing the cyclic GMP-AMP synthase activity. Palmitoylation at Cys-379 and Cys-380 by ZDHHC9 promotes homodimerization and cyclic GMP-AMP synthase activity. Depalmitoylation at Cys-379 and Cys-380 by LYPLAL1 impairs homodimerization and cyclic GMP-AMP synthase activity. Monomethylated at Lys-481 by SETD7. Monomethylation promotes interaction with SGF29, preventing interaction between PARP1 nad SGF29. Demethylation by RIOX1 promotes interaction with PARP1, followed by PARP1 inactivation. Post-translationally, lactylation by AARS2 prevents ability to undergo liquid-liquid phase separation (LLPS), thereby inhibiting CGAS activation.

The protein localises to the nucleus. It localises to the chromosome. The protein resides in the cell membrane. It is found in the cytoplasm. Its subcellular location is the cytosol. The enzyme catalyses GTP + ATP = 2',3'-cGAMP + 2 diphosphate. The catalysed reaction is GTP + ATP = pppGp(2'-5')A + diphosphate. It catalyses the reaction pppGp(2'-5')A = 2',3'-cGAMP + diphosphate. With respect to regulation, the enzyme activity is strongly increased by double-stranded DNA (dsDNA), but not by single-stranded DNA or RNA. DNA-binding induces the formation of liquid-like droplets in which CGAS is activated. Liquid-like droplets also create a selective environment that restricts entry of negative regulators, such as TREX1 or BANF1/BAF, allowing sensing of DNA. A number of mechanisms exist to restrict its activity toward self-DNA. The nucleotidyltransferase activity is inhibited in the nucleus via its association with nucleosomes: interacts with the acidic patch of histones H2A and H2B, thereby blocking DNA-binding and subsequent activation. CGAS is also inactive when associated with mitotic chromatin. Chromatin-bound CGAS cannot be activated by exogenous DNA in mitotic cells: phosphorylation of the N-terminal disordered part by AURKB during the G2-M transition blocks CGAS liquid phase separation and activation. Activity toward self-DNA is inhibited by BANF1/BAF upon acute loss of nuclear membrane integrity: BANF1/BAF acts by outcompeting CGAS for DNA-binding, thereby preventing CGAS activation. DNA-induced activation at micronuclei is also limited by TREX1, which degrades micronuclear DNA upon nuclear envelope rupture, thereby preventing CGAS activation. CGAS can be released from nucleosomes and activated by MRE11 component of the MRN complex, which displaces CGAS from acidic-patch-mediated sequestration. Acetylation at Lys-359, Lys-369 and Lys-389 inhibits the cyclic GMP-AMP synthase activity. Acetylation by KAT5 increases the cyclic GMP-AMP synthase activity by promoting DNA-binding and subsequent activation. Phosphorylation at Ser-278 suppresses the nucleotidyltransferase activity. Phosphorylation at Ser-410 promotes the cyclic GMP-AMP synthase activity. Phosphorylation at Ser-188 inhibits its cyclic GMP-AMP synthase activity. Ubiquitination at Lys-359 via 'Lys-27'-linked polyubiquitination enhances the cyclic GMP-AMP synthase activity. Monoubiquitination at Lys-322 promotes oligomerization and subsequent activation. Sumoylation at Lys-322, Lys-359 and Lys-369 prevents DNA-binding, oligomerization and nucleotidyltransferase activity. The enzyme activity is impaired by the cleavage by CASP1. In addition to DNA, also activated by collided ribosomes upon translation stress: specifically binds collided ribosomes, promoting its activation and triggering type-I interferon production. Nucleotidyltransferase that catalyzes the formation of cyclic GMP-AMP (2',3'-cGAMP) from ATP and GTP and plays a key role in innate immunity. Catalysis involves both the formation of a 2',5' phosphodiester linkage at the GpA step and the formation of a 3',5' phosphodiester linkage at the ApG step, producing c[G(2',5')pA(3',5')p]. Acts as a key DNA sensor: directly binds double-stranded DNA (dsDNA), inducing the formation of liquid-like droplets in which CGAS is activated, leading to synthesis of 2',3'-cGAMP, a second messenger that binds to and activates STING1, thereby triggering type-I interferon production. Preferentially binds long dsDNA (around 45 bp) and forms ladder-like networks that function cooperatively to stabilize individual cGAS-dsDNA complexes. Acts as a key foreign DNA sensor, the presence of double-stranded DNA (dsDNA) in the cytoplasm being a danger signal that triggers the immune responses. Has antiviral activity by sensing the presence of dsDNA from DNA viruses in the cytoplasm. Also acts as an innate immune sensor of infection by retroviruses by detecting the presence of reverse-transcribed DNA in the cytosol. Detection of retroviral reverse-transcribed DNA in the cytosol may be indirect and be mediated via interaction with PQBP1, which directly binds reverse-transcribed retroviral DNA. Also detects the presence of DNA from bacteria. 2',3'-cGAMP can be transferred from producing cells to neighboring cells through gap junctions, leading to promote STING1 activation and convey immune response to connecting cells. 2',3'-cGAMP can also be transferred between cells by virtue of packaging within viral particles contributing to IFN-induction in newly infected cells in a cGAS-independent but STING1-dependent manner. Also senses the presence of neutrophil extracellular traps (NETs) that are translocated to the cytosol following phagocytosis, leading to synthesis of 2',3'-cGAMP. In addition to foreign DNA, can also be activated by endogenous nuclear or mitochondrial DNA. When self-DNA leaks into the cytosol during cellular stress (such as mitochondrial stress, DNA damage, mitotic arrest or senescence), or is present in form of cytosolic micronuclei, CGAS is activated leading to a state of sterile inflammation. Acts as a regulator of cellular senescence by binding to cytosolic chromatin fragments that are present in senescent cells, leading to trigger type-I interferon production via STING1 and promote cellular senescence. Also involved in the inflammatory response to genome instability and double-stranded DNA breaks: acts by localizing to micronuclei arising from genome instability. Micronuclei, which are frequently found in cancer cells, consist of chromatin surrounded by their own nuclear membrane: following breakdown of the micronuclear envelope, a process associated with chromothripsis, CGAS binds self-DNA exposed to the cytosol, leading to 2',3'-cGAMP synthesis and subsequent activation of STING1 and type-I interferon production. In a healthy cell, CGAS is however kept inactive even in cellular events that directly expose it to self-DNA, such as mitosis, when cGAS associates with chromatin directly after nuclear envelope breakdown or remains in the form of postmitotic persistent nuclear cGAS pools bound to chromatin. Nuclear CGAS is inactivated by chromatin via direct interaction with nucleosomes, which block CGAS from DNA binding and thus prevent CGAS-induced autoimmunity. Also acts as a suppressor of DNA repair in response to DNA damage: inhibits homologous recombination repair by interacting with PARP1, the CGAS-PARP1 interaction leading to impede the formation of the PARP1-TIMELESS complex. In addition to DNA, also sense translation stress: in response to translation stress, translocates to the cytosol and associates with collided ribosomes, promoting its activation and triggering type-I interferon production. The protein is Cyclic GMP-AMP synthase of Sus scrofa (Pig).